We begin with the raw amino-acid sequence, 155 residues long: uncharacterized protein (155 aa).

Disordered regions lie at residues 1-22 and 108-155; these read MSSQ…TFTF and PFNK…DTQA. An N-acetylserine modification is found at Ser2. 3 positions are modified to phosphoserine: Ser136, Ser144, and Ser146. Acidic residues predominate over residues 136 to 155; it reads SDEDLDAESDSEGEDEDTQA.

This is an uncharacterized protein from Rattus norvegicus (Rat).